The following is an 80-amino-acid chain: Cytochrome c oxidase subunit 7B, mitochondrial (80 aa).

A mitochondrion-targeting transit peptide spans M1–Q24. Over S25 to D32 the chain is Mitochondrial matrix. A helical membrane pass occupies residues F33 to Q59. The Mitochondrial intermembrane segment spans residues V60–Q80.

The protein belongs to the cytochrome c oxidase VIIb family. As to quaternary structure, component of the cytochrome c oxidase (complex IV, CIV), a multisubunit enzyme composed of 14 subunits. The complex is composed of a catalytic core of 3 subunits MT-CO1, MT-CO2 and MT-CO3, encoded in the mitochondrial DNA, and 11 supernumerary subunits COX4I, COX5A, COX5B, COX6A, COX6B, COX6C, COX7A, COX7B, COX7C, COX8 and NDUFA4, which are encoded in the nuclear genome. The complex exists as a monomer or a dimer and forms supercomplexes (SCs) in the inner mitochondrial membrane with NADH-ubiquinone oxidoreductase (complex I, CI) and ubiquinol-cytochrome c oxidoreductase (cytochrome b-c1 complex, complex III, CIII), resulting in different assemblies (supercomplex SCI(1)III(2)IV(1) and megacomplex MCI(2)III(2)IV(2)).

It is found in the mitochondrion inner membrane. Its pathway is energy metabolism; oxidative phosphorylation. Component of the cytochrome c oxidase, the last enzyme in the mitochondrial electron transport chain which drives oxidative phosphorylation. The respiratory chain contains 3 multisubunit complexes succinate dehydrogenase (complex II, CII), ubiquinol-cytochrome c oxidoreductase (cytochrome b-c1 complex, complex III, CIII) and cytochrome c oxidase (complex IV, CIV), that cooperate to transfer electrons derived from NADH and succinate to molecular oxygen, creating an electrochemical gradient over the inner membrane that drives transmembrane transport and the ATP synthase. Cytochrome c oxidase is the component of the respiratory chain that catalyzes the reduction of oxygen to water. Electrons originating from reduced cytochrome c in the intermembrane space (IMS) are transferred via the dinuclear copper A center (CU(A)) of subunit 2 and heme A of subunit 1 to the active site in subunit 1, a binuclear center (BNC) formed by heme A3 and copper B (CU(B)). The BNC reduces molecular oxygen to 2 water molecules using 4 electrons from cytochrome c in the IMS and 4 protons from the mitochondrial matrix. Plays a role in proper central nervous system (CNS) development in vertebrates. In Pongo abelii (Sumatran orangutan), this protein is Cytochrome c oxidase subunit 7B, mitochondrial (COX7B).